The chain runs to 339 residues: 4-hydroxy-2-oxovalerate aldolase (339 aa).

The 253-residue stretch at 7–259 (VILHDMSLRD…QSGIDLYKIM (253 aa)) folds into the Pyruvate carboxyltransferase domain. 15–16 (RD) is a binding site for substrate. Asp16 is a binding site for Mn(2+). His19 serves as the catalytic Proton acceptor. Ser169 and His198 together coordinate substrate. The Mn(2+) site is built by His198 and His200. Tyr289 is a binding site for substrate.

The protein belongs to the 4-hydroxy-2-oxovalerate aldolase family.

The enzyme catalyses (S)-4-hydroxy-2-oxopentanoate = acetaldehyde + pyruvate. This Marinomonas sp. (strain MWYL1) protein is 4-hydroxy-2-oxovalerate aldolase.